The sequence spans 117 residues: Large ribosomal subunit protein bL20c (117 aa).

Belongs to the bacterial ribosomal protein bL20 family.

The protein resides in the plastid. It is found in the chloroplast. Functionally, binds directly to 23S ribosomal RNA and is necessary for the in vitro assembly process of the 50S ribosomal subunit. It is not involved in the protein synthesizing functions of that subunit. In Olimarabidopsis pumila (Dwarf rocket), this protein is Large ribosomal subunit protein bL20c.